The chain runs to 377 residues: Nitric oxide reductase FlRd-NAD(+) reductase (377 aa).

Belongs to the FAD-dependent oxidoreductase family. It depends on FAD as a cofactor.

The protein localises to the cytoplasm. It catalyses the reaction 2 reduced [nitric oxide reductase rubredoxin domain] + NAD(+) + H(+) = 2 oxidized [nitric oxide reductase rubredoxin domain] + NADH. It functions in the pathway nitrogen metabolism; nitric oxide reduction. Functionally, one of at least two accessory proteins for anaerobic nitric oxide (NO) reductase. Reduces the rubredoxin moiety of NO reductase. The chain is Nitric oxide reductase FlRd-NAD(+) reductase from Escherichia coli O6:K15:H31 (strain 536 / UPEC).